A 168-amino-acid chain; its full sequence is uncharacterized protein (168 aa).

This is an uncharacterized protein from Saccharomyces cerevisiae (strain ATCC 204508 / S288c) (Baker's yeast).